A 235-amino-acid chain; its full sequence is Fms-related tyrosine kinase 3 ligand (235 aa).

Residues 1 to 26 (MTVLAPAWSPTTYLLLLLLLSSGLSG) form the signal peptide. Topologically, residues 27-184 (TQDCSFQHSP…EATAPTAPQP (158 aa)) are extracellular. 3 cysteine pairs are disulfide-bonded: Cys-30–Cys-111, Cys-70–Cys-153, and Cys-119–Cys-158. N-linked (GlcNAc...) asparagine glycosylation is found at Asn-126 and Asn-149. A helical membrane pass occupies residues 185 to 205 (PLLLLLLLPVGLLLLAAAWCL). The Cytoplasmic segment spans residues 206 to 235 (HWQRTRRRTPRPGEQVPPVPSPQDLLLVEH). The interval 213–235 (RTPRPGEQVPPVPSPQDLLLVEH) is disordered.

In terms of assembly, homodimer (isoform 2).

It is found in the cell membrane. It localises to the secreted. Its function is as follows. Stimulates the proliferation of early hematopoietic cells by activating FLT3. Synergizes well with a number of other colony stimulating factors and interleukins. Required for the development of B cells, and dendritic cells (DCs). This is Fms-related tyrosine kinase 3 ligand (FLT3LG) from Homo sapiens (Human).